Here is a 234-residue protein sequence, read N- to C-terminus: Probable septum site-determining protein MinC (234 aa).

Belongs to the MinC family. Interacts with MinD and FtsZ.

Functionally, cell division inhibitor that blocks the formation of polar Z ring septums. Rapidly oscillates between the poles of the cell to destabilize FtsZ filaments that have formed before they mature into polar Z rings. Prevents FtsZ polymerization. This is Probable septum site-determining protein MinC from Buchnera aphidicola subsp. Baizongia pistaciae (strain Bp).